The chain runs to 77 residues: Small ribosomal subunit protein bS21 (77 aa).

Basic and acidic residues predominate over residues 38-52 (KPSEKRAREKAEAVR). Positions 38–77 (KPSEKRAREKAEAVRRTRKLARKRAQREGLISNGRGSPLK) are disordered. A compositionally biased stretch (basic residues) spans 53 to 62 (RTRKLARKRA).

It belongs to the bacterial ribosomal protein bS21 family.

The protein is Small ribosomal subunit protein bS21 of Bartonella henselae (strain ATCC 49882 / DSM 28221 / CCUG 30454 / Houston 1) (Rochalimaea henselae).